The sequence spans 195 residues: Imidazoleglycerol-phosphate dehydratase (195 aa).

It belongs to the imidazoleglycerol-phosphate dehydratase family.

It is found in the cytoplasm. It catalyses the reaction D-erythro-1-(imidazol-4-yl)glycerol 3-phosphate = 3-(imidazol-4-yl)-2-oxopropyl phosphate + H2O. It participates in amino-acid biosynthesis; L-histidine biosynthesis; L-histidine from 5-phospho-alpha-D-ribose 1-diphosphate: step 6/9. The polypeptide is Imidazoleglycerol-phosphate dehydratase (Campylobacter concisus (strain 13826)).